We begin with the raw amino-acid sequence, 507 residues long: DNA ligase B (507 aa).

A not required for adenylyltransferase activity, required for nick joining region spans residues 1–172; the sequence is MLLHDVAITS…AAAAGLSGAA (172 aa). An ATP-binding site is contributed by glutamate 209. The active-site N6-AMP-lysine intermediate is lysine 211. 6 residues coordinate ATP: arginine 216, arginine 231, glutamate 260, phenylalanine 300, arginine 372, and lysine 378.

This sequence belongs to the ATP-dependent DNA ligase family. As to quaternary structure, monomer. The cofactor is Mg(2+).

The enzyme catalyses ATP + (deoxyribonucleotide)n-3'-hydroxyl + 5'-phospho-(deoxyribonucleotide)m = (deoxyribonucleotide)n+m + AMP + diphosphate.. Its function is as follows. DNA ligase that seals nicks in double-stranded DNA during DNA replication, DNA recombination and DNA repair. The chain is DNA ligase B (ligB) from Mycobacterium tuberculosis (strain ATCC 25618 / H37Rv).